The primary structure comprises 366 residues: Alcohol dehydrogenase (366 aa).

The Zn(2+) site is built by cysteine 41, histidine 62, glutamate 63, and aspartate 167.

The protein belongs to the zinc-containing alcohol dehydrogenase family. As to quaternary structure, homotetramer. The cofactor is Zn(2+).

The enzyme catalyses a primary alcohol + NAD(+) = an aldehyde + NADH + H(+). The catalysed reaction is a secondary alcohol + NAD(+) = a ketone + NADH + H(+). It carries out the reaction (R,R)-butane-2,3-diol + NAD(+) = (R)-acetoin + NADH + H(+). It catalyses the reaction an aldehyde + NAD(+) + H2O = a carboxylate + NADH + 2 H(+). Multifunctional alcohol dehydrogenase exhibiting NAD(+)-dependent dehydrogenase activities for 2,3-butanediol, ethanol and acetaldehyde, and reductase activities for acetoin (NADH-dependent), and diacetyl and acetaldehyde (independently of whether NADH or NADPH is the reductant). The rate of oxidation of 2,3-butanediol is much higher than for the oxidation of ethanol. Has acetaldehyde dehydrogenase activity leading to acetate formation. May function in the release of excess reducing power in the absence of exogenous hydrogen acceptors such as oxygen. The protein is Alcohol dehydrogenase (adh) of Cupriavidus necator (strain ATCC 17699 / DSM 428 / KCTC 22496 / NCIMB 10442 / H16 / Stanier 337) (Ralstonia eutropha).